Reading from the N-terminus, the 323-residue chain is tRNA U34 carboxymethyltransferase (323 aa).

Carboxy-S-adenosyl-L-methionine contacts are provided by residues lysine 91, tryptophan 105, lysine 110, glycine 130, 152–154, 181–182, methionine 196, tyrosine 200, and arginine 315; these read DPT and IE.

This sequence belongs to the class I-like SAM-binding methyltransferase superfamily. CmoB family. As to quaternary structure, homotetramer.

It carries out the reaction carboxy-S-adenosyl-L-methionine + 5-hydroxyuridine(34) in tRNA = 5-carboxymethoxyuridine(34) in tRNA + S-adenosyl-L-homocysteine + H(+). Functionally, catalyzes carboxymethyl transfer from carboxy-S-adenosyl-L-methionine (Cx-SAM) to 5-hydroxyuridine (ho5U) to form 5-carboxymethoxyuridine (cmo5U) at position 34 in tRNAs. In Salmonella typhi, this protein is tRNA U34 carboxymethyltransferase.